A 546-amino-acid polypeptide reads, in one-letter code: Phosphomethylpyrimidine synthase (546 aa).

Substrate is bound by residues N145, M174, Y203, H239, S259 to G261, D300 to R303, and E339. H343 contacts Zn(2+). A substrate-binding site is contributed by Y366. H407 serves as a coordination point for Zn(2+). Positions 487, 490, and 495 each coordinate [4Fe-4S] cluster.

This sequence belongs to the ThiC family. [4Fe-4S] cluster serves as cofactor.

It carries out the reaction 5-amino-1-(5-phospho-beta-D-ribosyl)imidazole + S-adenosyl-L-methionine = 4-amino-2-methyl-5-(phosphooxymethyl)pyrimidine + CO + 5'-deoxyadenosine + formate + L-methionine + 3 H(+). It functions in the pathway cofactor biosynthesis; thiamine diphosphate biosynthesis. Catalyzes the synthesis of the hydroxymethylpyrimidine phosphate (HMP-P) moiety of thiamine from aminoimidazole ribotide (AIR) in a radical S-adenosyl-L-methionine (SAM)-dependent reaction. The sequence is that of Phosphomethylpyrimidine synthase from Mycobacterium marinum (strain ATCC BAA-535 / M).